Here is a 419-residue protein sequence, read N- to C-terminus: Pregnancy-specific beta-1-glycoprotein 4 (419 aa).

Positions 1–34 (MGPLSAPPCTQRITWKGVLLTASLLNFWNPPTTA) are cleaved as a signal peptide. The 110-residue stretch at 35 to 144 (QVTIEAQPPK…TGHFTFTLHL (110 aa)) folds into the Ig-like V-type domain. Residues asparagine 104, asparagine 111, asparagine 199, asparagine 268, asparagine 299, and asparagine 303 are each glycosylated (N-linked (GlcNAc...) asparagine). 3 consecutive Ig-like C2-type domains span residues 147–234 (PKPS…VTLN), 237–327 (PKLS…VTLN), and 332–410 (PDLP…KSIT). 3 disulfide bridges follow: cysteine 169–cysteine 217, cysteine 262–cysteine 310, and cysteine 354–cysteine 394.

It belongs to the immunoglobulin superfamily. CEA family.

The protein localises to the secreted. This is Pregnancy-specific beta-1-glycoprotein 4 (PSG4) from Homo sapiens (Human).